Consider the following 357-residue polypeptide: Phospho-N-acetylmuramoyl-pentapeptide-transferase (357 aa).

10 consecutive transmembrane segments (helical) span residues 23-43 (AIFSLLTSFFINLYIGPYFIY), 70-90 (TMGGIFIIFSILFSTILYCNL), 91-111 (SNIYIWYVISILIGYGLIGFI), 127-147 (LKWKYFFLSIIAFIFICMIKI), 171-191 (YLYVFLSYFVLVGTSNAVNLT), 196-216 (GLAIMPVIFLTCGLTLISLFS), 236-256 (LAILCMAIVGSGLGFLWFNSY), 260-280 (VFMGDVGSLALGGSLGAIAIL), 286-306 (LLIIMGGIFVFETISVILQII), and 334-354 (LIIVRFWIVSLILLLISLISL).

Belongs to the glycosyltransferase 4 family. MraY subfamily. Requires Mg(2+) as cofactor.

It is found in the cell inner membrane. It catalyses the reaction UDP-N-acetyl-alpha-D-muramoyl-L-alanyl-gamma-D-glutamyl-meso-2,6-diaminopimeloyl-D-alanyl-D-alanine + di-trans,octa-cis-undecaprenyl phosphate = di-trans,octa-cis-undecaprenyl diphospho-N-acetyl-alpha-D-muramoyl-L-alanyl-D-glutamyl-meso-2,6-diaminopimeloyl-D-alanyl-D-alanine + UMP. Its pathway is cell wall biogenesis; peptidoglycan biosynthesis. Its function is as follows. Catalyzes the initial step of the lipid cycle reactions in the biosynthesis of the cell wall peptidoglycan: transfers peptidoglycan precursor phospho-MurNAc-pentapeptide from UDP-MurNAc-pentapeptide onto the lipid carrier undecaprenyl phosphate, yielding undecaprenyl-pyrophosphoryl-MurNAc-pentapeptide, known as lipid I. In Buchnera aphidicola subsp. Acyrthosiphon pisum (strain Tuc7), this protein is Phospho-N-acetylmuramoyl-pentapeptide-transferase.